The primary structure comprises 218 residues: ATP phosphoribosyltransferase (218 aa).

The protein belongs to the ATP phosphoribosyltransferase family. Short subfamily. Heteromultimer composed of HisG and HisZ subunits.

The protein localises to the cytoplasm. The enzyme catalyses 1-(5-phospho-beta-D-ribosyl)-ATP + diphosphate = 5-phospho-alpha-D-ribose 1-diphosphate + ATP. The protein operates within amino-acid biosynthesis; L-histidine biosynthesis; L-histidine from 5-phospho-alpha-D-ribose 1-diphosphate: step 1/9. Catalyzes the condensation of ATP and 5-phosphoribose 1-diphosphate to form N'-(5'-phosphoribosyl)-ATP (PR-ATP). Has a crucial role in the pathway because the rate of histidine biosynthesis seems to be controlled primarily by regulation of HisG enzymatic activity. This is ATP phosphoribosyltransferase from Burkholderia mallei (strain ATCC 23344).